The chain runs to 1400 residues: DNA-directed RNA polymerase subunit beta' (1400 aa).

Zn(2+) is bound by residues cysteine 71, cysteine 73, cysteine 86, and cysteine 89. Mg(2+) contacts are provided by aspartate 462, aspartate 464, and aspartate 466. Zn(2+)-binding residues include cysteine 811, cysteine 885, cysteine 892, and cysteine 895.

This sequence belongs to the RNA polymerase beta' chain family. The RNAP catalytic core consists of 2 alpha, 1 beta, 1 beta' and 1 omega subunit. When a sigma factor is associated with the core the holoenzyme is formed, which can initiate transcription. It depends on Mg(2+) as a cofactor. The cofactor is Zn(2+).

It catalyses the reaction RNA(n) + a ribonucleoside 5'-triphosphate = RNA(n+1) + diphosphate. Its function is as follows. DNA-dependent RNA polymerase catalyzes the transcription of DNA into RNA using the four ribonucleoside triphosphates as substrates. The polypeptide is DNA-directed RNA polymerase subunit beta' (Brucella canis (strain ATCC 23365 / NCTC 10854 / RM-666)).